Here is a 624-residue protein sequence, read N- to C-terminus: Phosphoenolpyruvate carboxykinase [GTP] (624 aa).

Residues R88 and 222-224 (YGG) each bind substrate. Mn(2+)-binding residues include K231 and H250. S272 serves as a coordination point for substrate. 273-278 (MCGKTS) provides a ligand contact to GTP. The active site involves C274. D291 serves as a coordination point for Mn(2+). Substrate is bound at residue 386-388 (NAR). Residues R388 and R420 each contribute to the GTP site.

It belongs to the phosphoenolpyruvate carboxykinase [GTP] family. Requires Mn(2+) as cofactor.

Its subcellular location is the cytoplasm. It catalyses the reaction oxaloacetate + GTP = phosphoenolpyruvate + GDP + CO2. It participates in carbohydrate biosynthesis; gluconeogenesis. In terms of biological role, catalyzes the conversion of oxaloacetate (OAA) to phosphoenolpyruvate (PEP), the rate-limiting step in the metabolic pathway that produces glucose from lactate and other precursors derived from the citric acid cycle. The chain is Phosphoenolpyruvate carboxykinase [GTP] from Pyrococcus furiosus (strain ATCC 43587 / DSM 3638 / JCM 8422 / Vc1).